The following is a 201-amino-acid chain: Holliday junction branch migration complex subunit RuvA (201 aa).

The domain I stretch occupies residues 1-65 (MIAYIEGRVA…EDALELYGFS (65 aa)). The segment at 66–143 (GWDERQTFLV…KVESLPASAG (78 aa)) is domain II. A flexible linker region spans residues 143-147 (GLAAG). A domain III region spans residues 148 to 201 (VPGSVLRDAVQALGNLGYAEEEAAPVLKNILKQDPDLDVSEALRAALKALAKAR).

This sequence belongs to the RuvA family. In terms of assembly, homotetramer. Forms an RuvA(8)-RuvB(12)-Holliday junction (HJ) complex. HJ DNA is sandwiched between 2 RuvA tetramers; dsDNA enters through RuvA and exits via RuvB. An RuvB hexamer assembles on each DNA strand where it exits the tetramer. Each RuvB hexamer is contacted by two RuvA subunits (via domain III) on 2 adjacent RuvB subunits; this complex drives branch migration. In the full resolvosome a probable DNA-RuvA(4)-RuvB(12)-RuvC(2) complex forms which resolves the HJ.

It localises to the cytoplasm. In terms of biological role, the RuvA-RuvB-RuvC complex processes Holliday junction (HJ) DNA during genetic recombination and DNA repair, while the RuvA-RuvB complex plays an important role in the rescue of blocked DNA replication forks via replication fork reversal (RFR). RuvA specifically binds to HJ cruciform DNA, conferring on it an open structure. The RuvB hexamer acts as an ATP-dependent pump, pulling dsDNA into and through the RuvAB complex. HJ branch migration allows RuvC to scan DNA until it finds its consensus sequence, where it cleaves and resolves the cruciform DNA. The chain is Holliday junction branch migration complex subunit RuvA from Oleidesulfovibrio alaskensis (strain ATCC BAA-1058 / DSM 17464 / G20) (Desulfovibrio alaskensis).